The sequence spans 168 residues: Thiol peroxidase (168 aa).

The 150-residue stretch at 19 to 168 (PQAGSKAQAF…YDAALNVLKA (150 aa)) folds into the Thioredoxin domain. The Cysteine sulfenic acid (-SOH) intermediate role is filled by C61. A disulfide bond links C61 and C95.

Belongs to the peroxiredoxin family. Tpx subfamily. Homodimer.

It carries out the reaction a hydroperoxide + [thioredoxin]-dithiol = an alcohol + [thioredoxin]-disulfide + H2O. In terms of biological role, thiol-specific peroxidase that catalyzes the reduction of hydrogen peroxide and organic hydroperoxides to water and alcohols, respectively. Plays a role in cell protection against oxidative stress by detoxifying peroxides. In Salmonella typhi, this protein is Thiol peroxidase.